We begin with the raw amino-acid sequence, 320 residues long: Methionyl-tRNA formyltransferase (320 aa).

114-117 is a binding site for (6S)-5,6,7,8-tetrahydrofolate; that stretch reads SLLP.

The protein belongs to the Fmt family.

It carries out the reaction L-methionyl-tRNA(fMet) + (6R)-10-formyltetrahydrofolate = N-formyl-L-methionyl-tRNA(fMet) + (6S)-5,6,7,8-tetrahydrofolate + H(+). Its function is as follows. Attaches a formyl group to the free amino group of methionyl-tRNA(fMet). The formyl group appears to play a dual role in the initiator identity of N-formylmethionyl-tRNA by promoting its recognition by IF2 and preventing the misappropriation of this tRNA by the elongation apparatus. The protein is Methionyl-tRNA formyltransferase of Acinetobacter baumannii (strain ACICU).